The following is an 892-amino-acid chain: Nitrogen assimilation transcription factor nirA (892 aa).

Residues 1–32 form a disordered region; it reads MGEKLDPELSSDGPHTKSSSKGQGTSTDNAPA. The span at 16 to 27 shows a compositional bias: low complexity; the sequence is TKSSSKGQGTST. Positions 42 to 70 form a DNA-binding region, zn(2)-C6 fungal-type; sequence CIACRRRKSKCDGNLPSCAACSSVYHTTC. 3 disordered regions span residues 646–714, 731–761, and 842–892; these read GPWD…SGPV, AHNE…SAQE, and PNIP…SFQR. A compositionally biased stretch (low complexity) spans 649–674; that stretch reads DQAASPSTTSDSPPSVSSQSVVATTD. 3 stretches are compositionally biased toward polar residues: residues 675–714, 746–761, and 876–892; these read LSQP…SGPV, VSTS…SAQE, and NVNS…SFQR.

Its subcellular location is the nucleus. Its function is as follows. Pathway-specific regulatory gene of nitrate assimilation; it activates the transcription of the genes for nitrate and nitrite reductases (niaD and niiA). The sequence is that of Nitrogen assimilation transcription factor nirA (nirA) from Emericella nidulans (strain FGSC A4 / ATCC 38163 / CBS 112.46 / NRRL 194 / M139) (Aspergillus nidulans).